We begin with the raw amino-acid sequence, 384 residues long: Dual-specificity RNA methyltransferase RlmN (384 aa).

E105 (proton acceptor) is an active-site residue. The 240-residue stretch at 111 to 350 folds into the Radical SAM core domain; that stretch reads EDDRATLCVS…TIVRKTRGDD (240 aa). The cysteines at positions 118 and 355 are disulfide-linked. Positions 125, 129, and 132 each coordinate [4Fe-4S] cluster. Residues 179-180, S211, 233-235, and N312 contribute to the S-adenosyl-L-methionine site; these read GE and SLH. C355 functions as the S-methylcysteine intermediate in the catalytic mechanism.

The protein belongs to the radical SAM superfamily. RlmN family. Requires [4Fe-4S] cluster as cofactor.

It is found in the cytoplasm. It catalyses the reaction adenosine(2503) in 23S rRNA + 2 reduced [2Fe-2S]-[ferredoxin] + 2 S-adenosyl-L-methionine = 2-methyladenosine(2503) in 23S rRNA + 5'-deoxyadenosine + L-methionine + 2 oxidized [2Fe-2S]-[ferredoxin] + S-adenosyl-L-homocysteine. The enzyme catalyses adenosine(37) in tRNA + 2 reduced [2Fe-2S]-[ferredoxin] + 2 S-adenosyl-L-methionine = 2-methyladenosine(37) in tRNA + 5'-deoxyadenosine + L-methionine + 2 oxidized [2Fe-2S]-[ferredoxin] + S-adenosyl-L-homocysteine. Functionally, specifically methylates position 2 of adenine 2503 in 23S rRNA and position 2 of adenine 37 in tRNAs. m2A2503 modification seems to play a crucial role in the proofreading step occurring at the peptidyl transferase center and thus would serve to optimize ribosomal fidelity. The protein is Dual-specificity RNA methyltransferase RlmN of Shigella flexneri serotype 5b (strain 8401).